The sequence spans 548 residues: MDSQRNLLVIALLFVSFMIWQAWEQDKNPQPQAQQTTQTTTTAAGSAADQGVPASGQGKLISVKTDVLDLTINTRGGDVEQALLPAYPKELNSTQPFQLLETSPQFIYQAQSGLTGRDGPDNPANGPRPLYNVEKDAYVLAEGQNELQVPMTYTDAAGNTFTKTFVLKRGDYAVNVNYNVQNAGEKPLEISSFGQLKQSITLPPHLDTGSSNFALHTFRGAAYSTPDEKYEKYKFDTIADNENLNISSKGGWVAMLQQYFATAWSPHNDGTNNFYTANLGNGIAAIGYKSQPVLVQPGQTGAMNSTLWVGPEIQDKMAAVAPHLDLTVDYGWLWFISQPLFKLLKWIHSFVGNWGFSIIIITFIVRGIMYPLTKAQYTSMAKMRMLQPKIQAMRERLGDDKQRISQEMMALYKAEKVNPLGGCFPLLIQMPIFLALYYMLMGSVELRQAPFALWIHDLSAQDPYYILPILMGVTMFFIQKMSPTTVTDPMQQKIMTFMPVIFTVFFLWFPSGLVLYYIVSNLVTIIQQQLIYRGLEKRGLHSREKKKS.

The chain crosses the membrane as a helical span at residues 6 to 26 (NLLVIALLFVSFMIWQAWEQD). The interval 28–55 (NPQPQAQQTTQTTTTAAGSAADQGVPAS) is disordered. The segment covering 30 to 50 (QPQAQQTTQTTTTAAGSAADQ) has biased composition (low complexity). Transmembrane regions (helical) follow at residues 350–370 (FVGN…GIMY), 420–440 (LGGC…YYML), 458–478 (LSAQ…MFFI), and 499–519 (PVIF…YYIV).

The protein belongs to the OXA1/ALB3/YidC family. Type 1 subfamily. Interacts with the Sec translocase complex via SecD. Specifically interacts with transmembrane segments of nascent integral membrane proteins during membrane integration.

The protein localises to the cell inner membrane. Required for the insertion and/or proper folding and/or complex formation of integral membrane proteins into the membrane. Involved in integration of membrane proteins that insert both dependently and independently of the Sec translocase complex, as well as at least some lipoproteins. Aids folding of multispanning membrane proteins. This Shigella dysenteriae serotype 1 (strain Sd197) protein is Membrane protein insertase YidC.